Here is a 443-residue protein sequence, read N- to C-terminus: ATP-dependent protease ATPase subunit HslU (443 aa).

Residues isoleucine 18, 60–65, aspartate 256, glutamate 321, and arginine 393 each bind ATP; that span reads GVGKTE.

Belongs to the ClpX chaperone family. HslU subfamily. In terms of assembly, a double ring-shaped homohexamer of HslV is capped on each side by a ring-shaped HslU homohexamer. The assembly of the HslU/HslV complex is dependent on binding of ATP.

It is found in the cytoplasm. Its function is as follows. ATPase subunit of a proteasome-like degradation complex; this subunit has chaperone activity. The binding of ATP and its subsequent hydrolysis by HslU are essential for unfolding of protein substrates subsequently hydrolyzed by HslV. HslU recognizes the N-terminal part of its protein substrates and unfolds these before they are guided to HslV for hydrolysis. The protein is ATP-dependent protease ATPase subunit HslU of Histophilus somni (strain 2336) (Haemophilus somnus).